Consider the following 499-residue polypeptide: Probable cytosol aminopeptidase (499 aa).

Mn(2+) is bound by residues Lys269 and Asp274. Lys281 is a catalytic residue. Mn(2+) is bound by residues Asp292, Asp351, and Glu353. Arg355 is an active-site residue.

The protein belongs to the peptidase M17 family. Mn(2+) is required as a cofactor.

It localises to the cytoplasm. It carries out the reaction Release of an N-terminal amino acid, Xaa-|-Yaa-, in which Xaa is preferably Leu, but may be other amino acids including Pro although not Arg or Lys, and Yaa may be Pro. Amino acid amides and methyl esters are also readily hydrolyzed, but rates on arylamides are exceedingly low.. The enzyme catalyses Release of an N-terminal amino acid, preferentially leucine, but not glutamic or aspartic acids.. Presumably involved in the processing and regular turnover of intracellular proteins. Catalyzes the removal of unsubstituted N-terminal amino acids from various peptides. The protein is Probable cytosol aminopeptidase of Actinobacillus pleuropneumoniae serotype 7 (strain AP76).